The primary structure comprises 449 residues: UDP-N-acetylmuramoylalanine--D-glutamate ligase (449 aa).

ATP is bound at residue 113-119; sequence GTNGKTT.

Belongs to the MurCDEF family.

The protein resides in the cytoplasm. The enzyme catalyses UDP-N-acetyl-alpha-D-muramoyl-L-alanine + D-glutamate + ATP = UDP-N-acetyl-alpha-D-muramoyl-L-alanyl-D-glutamate + ADP + phosphate + H(+). Its pathway is cell wall biogenesis; peptidoglycan biosynthesis. Cell wall formation. Catalyzes the addition of glutamate to the nucleotide precursor UDP-N-acetylmuramoyl-L-alanine (UMA). In Gloeothece citriformis (strain PCC 7424) (Cyanothece sp. (strain PCC 7424)), this protein is UDP-N-acetylmuramoylalanine--D-glutamate ligase.